The primary structure comprises 121 residues: Large ribosomal subunit protein bL19 (121 aa).

It belongs to the bacterial ribosomal protein bL19 family.

This protein is located at the 30S-50S ribosomal subunit interface and may play a role in the structure and function of the aminoacyl-tRNA binding site. The chain is Large ribosomal subunit protein bL19 from Gloeobacter violaceus (strain ATCC 29082 / PCC 7421).